The chain runs to 188 residues: Casparian strip membrane protein 1 (188 aa).

Residues 1–24 (MKAGALELGHASKTTKSGVNRGMS) lie on the Cytoplasmic side of the membrane. The helical transmembrane segment at 25–45 (ILDLFIRIIAIIATLGSAIAM) threads the bilayer. Topologically, residues 46 to 72 (GTTNETLPFFTQFVRFKAKYSDLPTFT) are extracellular. The N-linked (GlcNAc...) asparagine glycan is linked to Asn49. The helical transmembrane segment at 73–93 (FFVVANAIVSAYLVLSLGLSI) threads the bilayer. The Cytoplasmic segment spans residues 94 to 105 (YHIMRSRAQATR). Residues 106-126 (IALIFFDAAMLGLLTGGASAS) traverse the membrane as a helical segment. Over 127–159 (AAIVYLAHKGNRKTNWFPICQQYDSFCHRTSGS) the chain is Extracellular. The chain crosses the membrane as a helical span at residues 160–180 (LVGSFAGSVLIILLIFLSAIA). Residues 181-188 (LSRQSLNH) are Cytoplasmic-facing.

This sequence belongs to the Casparian strip membrane proteins (CASP) family. In terms of assembly, homodimer and heterodimers.

Its subcellular location is the cell membrane. Its function is as follows. Regulates membrane-cell wall junctions and localized cell wall deposition. Required for establishment of the Casparian strip membrane domain (CSD) and the subsequent formation of Casparian strips, a cell wall modification of the root endodermis that determines an apoplastic barrier between the intraorganismal apoplasm and the extraorganismal apoplasm and prevents lateral diffusion. This Solanum tuberosum (Potato) protein is Casparian strip membrane protein 1.